A 144-amino-acid chain; its full sequence is Large ribosomal subunit protein uL15 (144 aa).

The disordered stretch occupies residues 1–48 (MIKLESLQDPSPRKRRTKLLGRGPSSGHGKTSCRGHKGDGSRSGYKRR).

The protein belongs to the universal ribosomal protein uL15 family. As to quaternary structure, part of the 50S ribosomal subunit.

Functionally, binds to the 23S rRNA. The sequence is that of Large ribosomal subunit protein uL15 from Chlamydia abortus (strain DSM 27085 / S26/3) (Chlamydophila abortus).